Here is a 90-residue protein sequence, read N- to C-terminus: RNA-binding protein Hfq (90 aa).

The Sm domain maps to 11–71 (DVFLNSVRKT…ISTIMPAAPV (61 aa)).

This sequence belongs to the Hfq family. As to quaternary structure, homohexamer.

RNA chaperone that binds small regulatory RNA (sRNAs) and mRNAs to facilitate mRNA translational regulation in response to envelope stress, environmental stress and changes in metabolite concentrations. Also binds with high specificity to tRNAs. The chain is RNA-binding protein Hfq from Maricaulis maris (strain MCS10) (Caulobacter maris).